The primary structure comprises 49 residues: Large ribosomal subunit protein bL33 (49 aa).

It belongs to the bacterial ribosomal protein bL33 family.

The sequence is that of Large ribosomal subunit protein bL33 from Finegoldia magna (strain ATCC 29328 / DSM 20472 / WAL 2508) (Peptostreptococcus magnus).